The primary structure comprises 447 residues: N-succinylarginine dihydrolase (447 aa).

Substrate is bound by residues 19–28 (AGLSFGNEAS), Asn-110, and 137–138 (HR). Glu-174 is a catalytic residue. Residue Arg-212 coordinates substrate. His-248 is a catalytic residue. Substrate contacts are provided by Asp-250 and Asn-359. The active-site Nucleophile is Cys-365.

This sequence belongs to the succinylarginine dihydrolase family. As to quaternary structure, homodimer.

It carries out the reaction N(2)-succinyl-L-arginine + 2 H2O + 2 H(+) = N(2)-succinyl-L-ornithine + 2 NH4(+) + CO2. Its pathway is amino-acid degradation; L-arginine degradation via AST pathway; L-glutamate and succinate from L-arginine: step 2/5. Its function is as follows. Catalyzes the hydrolysis of N(2)-succinylarginine into N(2)-succinylornithine, ammonia and CO(2). This is N-succinylarginine dihydrolase from Escherichia coli O1:K1 / APEC.